We begin with the raw amino-acid sequence, 829 residues long: Spindle-defective protein 2 (829 aa).

4 disordered regions span residues 1–29 (MNED…DGES), 41–104 (EDED…SNDI), 183–294 (KKDV…TTSD), and 326–471 (RKKR…NGHM). Residues 54–82 (FRLENRYKPSLHTPRELPTIREENREDVR) are compositionally biased toward basic and acidic residues. Residues 83-93 (SNTSSRVNTRP) show a composition bias toward polar residues. Positions 183–216 (KKDVTRKQENVRPGKMMPEKVNDENEPKSRRFSP) are enriched in basic and acidic residues. Polar residues-rich tracts occupy residues 217 to 230 (ERNT…NSTK) and 266 to 294 (PQRT…TTSD). The stretch at 314-332 (VDINLLTALENARKKRDRP) forms a coiled coil. Low complexity-rich tracts occupy residues 361-370 (SMTSIVSSST) and 384-408 (NSAT…RVST). 2 stretches are compositionally biased toward polar residues: residues 409 to 439 (AKND…NSMT) and 448 to 463 (SVSS…STMT).

It localises to the cytoplasm. It is found in the cytoskeleton. Its subcellular location is the microtubule organizing center. The protein localises to the centrosome. The protein resides in the centriole. In terms of biological role, required both for centrosome duplication and maturation. Required for pericentriolar material (PCM) recruitment. This is Spindle-defective protein 2 from Caenorhabditis briggsae.